We begin with the raw amino-acid sequence, 385 residues long: Cytochrome b (385 aa).

4 helical membrane-spanning segments follow: residues 32–52, 76–98, 113–133, and 179–199; these read MGSL…FMAM, YILR…MHMA, LWNV…LGYC, and FFAL…MHLM. Residues His82 and His96 each contribute to the heme b site. Heme b is bound by residues His183 and His197. His202 contacts a ubiquinone. A run of 4 helical transmembrane segments spans residues 225–245, 289–309, 321–341, and 348–368; these read FIFK…LFVF, LLGV…PFTD, LSKF…QIGA, and YVLM…IIVP.

It belongs to the cytochrome b family. Fungal cytochrome b-c1 complex contains 10 subunits; 3 respiratory subunits, 2 core proteins and 5 low-molecular weight proteins. Cytochrome b-c1 complex is a homodimer. Requires heme b as cofactor.

The protein localises to the mitochondrion inner membrane. Component of the ubiquinol-cytochrome c reductase complex (complex III or cytochrome b-c1 complex) that is part of the mitochondrial respiratory chain. The b-c1 complex mediates electron transfer from ubiquinol to cytochrome c. Contributes to the generation of a proton gradient across the mitochondrial membrane that is then used for ATP synthesis. This chain is Cytochrome b (COB), found in Saccharomyces paradoxus (Yeast).